A 61-amino-acid chain; its full sequence is Toxin S5C1 (61 aa).

4 disulfides stabilise this stretch: cysteine 3/cysteine 22, cysteine 16/cysteine 39, cysteine 41/cysteine 53, and cysteine 54/cysteine 59. The Cell attachment site motif lies at 45–47 (RGD).

The protein belongs to the three-finger toxin family. Short-chain subfamily. Antiplatelet toxin sub-subfamily. As to expression, expressed by the venom gland.

Its subcellular location is the secreted. Functionally, inhibits ADP-induced platelet aggregation and inhibits the binding of purified platelet fibrinogen receptor alpha-IIb/beta-3 (ITGA2B/ITGB3) to immobilized fibrinogen. This chain is Toxin S5C1, found in Dendroaspis jamesoni kaimosae (Eastern Jameson's mamba).